The sequence spans 172 residues: 3-phenylpropionate/cinnamic acid dioxygenase subunit beta (172 aa).

Belongs to the bacterial ring-hydroxylating dioxygenase beta subunit family. In terms of assembly, this dioxygenase system consists of four proteins: the two subunits of the hydroxylase component (HcaE and HcaF), a ferredoxin (HcaC) and a ferredoxin reductase (HcaD).

The catalysed reaction is 3-phenylpropanoate + NADH + O2 + H(+) = 3-(cis-5,6-dihydroxycyclohexa-1,3-dien-1-yl)propanoate + NAD(+). The enzyme catalyses (E)-cinnamate + NADH + O2 + H(+) = (2E)-3-(cis-5,6-dihydroxycyclohexa-1,3-dien-1-yl)prop-2-enoate + NAD(+). It participates in aromatic compound metabolism; 3-phenylpropanoate degradation. Functionally, part of the multicomponent 3-phenylpropionate dioxygenase. Converts 3-phenylpropionic acid (PP) and cinnamic acid (CI) into 3-phenylpropionate-dihydrodiol (PP-dihydrodiol) and cinnamic acid-dihydrodiol (CI-dihydrodiol), respectively. The chain is 3-phenylpropionate/cinnamic acid dioxygenase subunit beta from Escherichia coli O7:K1 (strain IAI39 / ExPEC).